A 444-amino-acid chain; its full sequence is Acyl-CoA (8-3)-desaturase (444 aa).

At Met1 the chain carries N-acetylmethionine. Residues Met1 to Arg121 are Cytoplasmic-facing. A Cytochrome b5 heme-binding domain is found at Pro17–Ser94. Residues Met122 to Leu142 traverse the membrane as a helical segment. Topologically, residues Asp143–Ala145 are lumenal. Residues Ala146–Val170 traverse the membrane as a helical segment. Residues Gln171 to Phe267 lie on the Cytoplasmic side of the membrane. Positions His179 to His183 match the Histidine box-1 motif. A Histidine box-2 motif is present at residues His216 to His220. Residues Leu268–Ile288 traverse the membrane as a helical segment. Topologically, residues Gln289–Arg305 are lumenal. A helical transmembrane segment spans residues Phe306–Val326. Over Arg327–Gln444 the chain is Cytoplasmic. The Histidine box-3 signature appears at Gln382–His386.

The protein belongs to the fatty acid desaturase type 1 family. Widely expressed, with highest levels in liver, brain, adrenal gland and heart. Highly expressed in fetal liver and brain.

It is found in the endoplasmic reticulum membrane. It localises to the mitochondrion. It carries out the reaction (8Z,11Z,14Z)-eicosatrienoyl-CoA + 2 Fe(II)-[cytochrome b5] + O2 + 2 H(+) = (5Z,8Z,11Z,14Z)-eicosatetraenoyl-CoA + 2 Fe(III)-[cytochrome b5] + 2 H2O. It catalyses the reaction (8Z,11Z,14Z,17Z)-eicosatetraenoyl-CoA + 2 Fe(II)-[cytochrome b5] + O2 + 2 H(+) = (5Z,8Z,11Z,14Z,17Z)-eicosapentaenoyl-CoA + 2 Fe(III)-[cytochrome b5] + 2 H2O. The catalysed reaction is (11E)-octadecenoyl-CoA + 2 Fe(II)-[cytochrome b5] + O2 + 2 H(+) = (5Z,11E)-octadecadienoyl-CoA + 2 Fe(III)-[cytochrome b5] + 2 H2O. It functions in the pathway lipid metabolism; polyunsaturated fatty acid biosynthesis. Its function is as follows. Acts as a front-end fatty acyl-coenzyme A (CoA) desaturase that introduces a cis double bond at carbon 5 located between a preexisting double bond and the carboxyl end of the fatty acyl chain. Involved in biosynthesis of highly unsaturated fatty acids (HUFA) from the essential polyunsaturated fatty acids (PUFA) linoleic acid (LA) (18:2n-6) and alpha-linolenic acid (ALA) (18:3n-3) precursors. Specifically, desaturates dihomo-gamma-linoleoate (DGLA) (20:3n-6) and eicosatetraenoate (ETA) (20:4n-3) to generate arachidonate (AA) (20:4n-6) and eicosapentaenoate (EPA) (20:5n-3), respectively. As a rate limiting enzyme for DGLA (20:3n-6) and AA (20:4n-6)-derived eicosanoid biosynthesis, controls the metabolism of inflammatory lipids like prostaglandin E2, critical for efficient acute inflammatory response and maintenance of epithelium homeostasis. Contributes to membrane phospholipid biosynthesis by providing AA (20:4n-6) as a major acyl chain esterified into phospholipids. In particular, regulates phosphatidylinositol-4,5-bisphosphate levels, modulating inflammatory cytokine production in T-cells. Also desaturates (11E)-octadecenoate (trans-vaccenoate)(18:1n-9), a metabolite in the biohydrogenation pathway of LA (18:2n-6). In terms of biological role, does not exhibit any catalytic activity toward 20:3n-6, but it may enhance FADS2 activity. The sequence is that of Acyl-CoA (8-3)-desaturase from Homo sapiens (Human).